A 636-amino-acid chain; its full sequence is Chaperone protein HtpG (636 aa).

Positions 1–349 (MAKHQFQTEV…SEDLPLNVSR (349 aa)) are a; substrate-binding. A b region spans residues 350 to 562 (EILQENRILA…ADAQMAAMAH (213 aa)). A c region spans residues 563–636 (MFRAMGQAMP…RLSRITAKAL (74 aa)).

It belongs to the heat shock protein 90 family. Homodimer.

Its subcellular location is the cytoplasm. Its function is as follows. Molecular chaperone. Has ATPase activity. This chain is Chaperone protein HtpG, found in Aliarcobacter butzleri (strain RM4018) (Arcobacter butzleri).